Consider the following 250-residue polypeptide: Ubiquinone/menaquinone biosynthesis C-methyltransferase UbiE (250 aa).

S-adenosyl-L-methionine contacts are provided by residues Thr-73, Asp-94, 122–123 (NA), and Ser-139.

This sequence belongs to the class I-like SAM-binding methyltransferase superfamily. MenG/UbiE family.

The enzyme catalyses a 2-demethylmenaquinol + S-adenosyl-L-methionine = a menaquinol + S-adenosyl-L-homocysteine + H(+). It carries out the reaction a 2-methoxy-6-(all-trans-polyprenyl)benzene-1,4-diol + S-adenosyl-L-methionine = a 5-methoxy-2-methyl-3-(all-trans-polyprenyl)benzene-1,4-diol + S-adenosyl-L-homocysteine + H(+). It participates in quinol/quinone metabolism; menaquinone biosynthesis; menaquinol from 1,4-dihydroxy-2-naphthoate: step 2/2. The protein operates within cofactor biosynthesis; ubiquinone biosynthesis. Its function is as follows. Methyltransferase required for the conversion of demethylmenaquinol (DMKH2) to menaquinol (MKH2) and the conversion of 2-polyprenyl-6-methoxy-1,4-benzoquinol (DDMQH2) to 2-polyprenyl-3-methyl-6-methoxy-1,4-benzoquinol (DMQH2). This Francisella philomiragia subsp. philomiragia (strain ATCC 25017 / CCUG 19701 / FSC 153 / O#319-036) protein is Ubiquinone/menaquinone biosynthesis C-methyltransferase UbiE.